Here is an 880-residue protein sequence, read N- to C-terminus: Alanine--tRNA ligase (880 aa).

Residues His-558, His-562, Cys-663, and His-667 each coordinate Zn(2+).

This sequence belongs to the class-II aminoacyl-tRNA synthetase family. Zn(2+) serves as cofactor.

The protein resides in the cytoplasm. It carries out the reaction tRNA(Ala) + L-alanine + ATP = L-alanyl-tRNA(Ala) + AMP + diphosphate. Catalyzes the attachment of alanine to tRNA(Ala) in a two-step reaction: alanine is first activated by ATP to form Ala-AMP and then transferred to the acceptor end of tRNA(Ala). Also edits incorrectly charged Ser-tRNA(Ala) and Gly-tRNA(Ala) via its editing domain. This Mycoplasmopsis agalactiae (strain NCTC 10123 / CIP 59.7 / PG2) (Mycoplasma agalactiae) protein is Alanine--tRNA ligase.